Consider the following 481-residue polypeptide: UDP-glycosyltransferase 88F4 (481 aa).

UDP-alpha-D-glucose is bound by residues S288, W357–A358, H375–E383, and Y397–Q400.

This sequence belongs to the UDP-glycosyltransferase family.

In terms of biological role, glycosyltransferase that may possess chalcone and dihydrochalcone 2'-O-glucosyltransferase activity. In Malus domestica (Apple), this protein is UDP-glycosyltransferase 88F4.